The following is a 276-amino-acid chain: Undecaprenyl-diphosphatase (276 aa).

A run of 8 helical transmembrane segments spans residues 1–21, 39–59, 84–104, 115–135, 159–179, 188–208, 222–242, and 253–273; these read MSWL…FLPV, AGAS…LIYF, YRLG…GLLF, LWLV…AEYY, LALM…LFLG, FGFL…LPDA, QLIV…AWFL, and FVGY…TGVL.

The protein belongs to the UppP family.

Its subcellular location is the cell membrane. The catalysed reaction is di-trans,octa-cis-undecaprenyl diphosphate + H2O = di-trans,octa-cis-undecaprenyl phosphate + phosphate + H(+). Its function is as follows. Catalyzes the dephosphorylation of undecaprenyl diphosphate (UPP). Confers resistance to bacitracin. In Mycolicibacterium smegmatis (strain ATCC 700084 / mc(2)155) (Mycobacterium smegmatis), this protein is Undecaprenyl-diphosphatase.